The primary structure comprises 419 residues: Carbohydrate sulfotransferase 12 (419 aa).

Residues 1–5 (MTKPR) are Cytoplasmic-facing. A helical; Signal-anchor for type II membrane protein transmembrane segment spans residues 6 to 26 (LFRLWLVLGSALMILLIIVYW). Residues 27–419 (DNVGTAHFYL…YPKPENLLRD (393 aa)) lie on the Lumenal side of the membrane. The segment covering 78-87 (HNDLSRRKTE) has biased composition (basic and acidic residues). The interval 78–99 (HNDLSRRKTEQPPVPAPSKPVL) is disordered. N-linked (GlcNAc...) asparagine glycosylation occurs at asparagine 139. 176 to 182 (PKVACTN) is a binding site for 3'-phosphoadenylyl sulfate. N-linked (GlcNAc...) asparagine glycosylation occurs at asparagine 214. 250–258 (RDPFVRLIS) lines the 3'-phosphoadenylyl sulfate pocket. 2 N-linked (GlcNAc...) asparagine glycosylation sites follow: asparagine 285 and asparagine 375.

Belongs to the sulfotransferase 2 family.

It localises to the golgi apparatus membrane. It catalyses the reaction chondroitin beta-D-glucuronate + n 3'-phosphoadenylyl sulfate = chondroitin 4'-sulfate + n adenosine 3',5'-bisphosphate + n H(+). Functionally, catalyzes the transfer of sulfate to position 4 of the N-acetylgalactosamine (GalNAc) residue of chondroitin and desulfated dermatan sulfate. Chondroitin sulfate constitutes the predominant proteoglycan present in cartilage and is distributed on the surfaces of many cells and extracellular matrices. Activity toward partially desulfated dermatan sulfate is however lower. Does not form 4, 6-di-O-sulfated GalNAc when chondroitin sulfate C is used as an acceptor. In Mus musculus (Mouse), this protein is Carbohydrate sulfotransferase 12 (Chst12).